The following is a 644-amino-acid chain: MTHTRRIHILDPRLANQIAAGEVVERPASVVKELVENAIDAGSQRIEIDLESGGARLIRVRDDGRGIDQEDLPLALSRHATSKIASLDDLEGVDSLGFRGEALASISSVSRLELISNTHDEPSDGWRVVAEGRQMEPRVTPAPHPRGSSVVVRDLFFNTPARRKFLRTEKTEFGHVEEAFRRLALSRYDIGWILRHNQKVVHQLRAGDASTSMERRVGALLGRKFLENALHVDIEATGLRLWGWVGLPTHSRAQADQQYFFVNGRVVRDRLVAHAVRQAYRDVMFHGRHPVFVLYLELDPHVVDVNVHPTKHEVRFRDGRLVHDFLFSSLHRALADVRPNATSTEGGDEATPSTDATTATAAEASAGQAEPRWQQQGMALAAGQERERPAAHRVREFMAGYRALHPEHEASLLTPQPQEAAEEAAGTPAPPASSSPAMAETDDTQAPPLGYAVAQLHGVYILSQTERGLVVVDMHAAHERITYERMKQQVHGDGQALGRLQTQPLLVPVSIAASAREVETAENERATFERLGVELDVAGPETLLVRQVPVLLGNADVEALIHDMLGDLERFGRSDRLEVHINELLSSMACHGSVRANRRLTVPEMNALLRDMERTERSGQCNHGRPTWTEMSMHELDKLFLRGQ.

Disordered regions lie at residues arginine 338–alanine 390 and glutamine 416–glutamine 445. Low complexity-rich tracts occupy residues glutamate 349–alanine 366 and glutamine 416–threonine 427.

It belongs to the DNA mismatch repair MutL/HexB family.

This protein is involved in the repair of mismatches in DNA. It is required for dam-dependent methyl-directed DNA mismatch repair. May act as a 'molecular matchmaker', a protein that promotes the formation of a stable complex between two or more DNA-binding proteins in an ATP-dependent manner without itself being part of a final effector complex. This Chromohalobacter salexigens (strain ATCC BAA-138 / DSM 3043 / CIP 106854 / NCIMB 13768 / 1H11) protein is DNA mismatch repair protein MutL.